Here is a 612-residue protein sequence, read N- to C-terminus: Zinc metalloproteinase-disintegrin-like berythractivase (612 aa).

The signal sequence occupies residues 1–20 (MIQVLLVIICLEAFPYQGSS). A propeptide spanning residues 21–187 (IILESGNVND…EPIKKASLLN (167 aa)) is cleaved from the precursor. A Peptidase M12B domain is found at 200-396 (KYVEFVVVLD…NRPQCLLNKP (197 aa)). E203 is a binding site for Ca(2+). N260 is a glycosylation site (N-linked (GlcNAc...) asparagine). D287 is a binding site for Ca(2+). 3 disulfide bridges follow: C311–C391, C351–C375, and C353–C358. H336 contacts Zn(2+). E337 is a catalytic residue. Positions 340 and 346 each coordinate Zn(2+). The N-linked (GlcNAc...) asparagine glycan is linked to N348. N374 carries an N-linked (GlcNAc...) asparagine glycan. Residues C391, N394, V406, N409, L411, E413, E416, and D419 each contribute to the Ca(2+) site. The Disintegrin domain maps to 404–490 (PPVCGNELLE…DCPMDDFQRN (87 aa)). 14 disulfides stabilise this stretch: C407/C436, C418/C431, C420/C426, C430/C453, C444/C450, C449/C475, C462/C482, C469/C501, C494/C506, C513/C563, C528/C574, C541/C551, C558/C600, and C594/C605. The N-linked (GlcNAc...) asparagine glycan is linked to N432. Residues 468–470 (DCD) carry the D/ECD-tripeptide motif. Residues D470, L471, E473, and D485 each contribute to the Ca(2+) site.

It belongs to the venom metalloproteinase (M12B) family. P-III subfamily. P-IIIa sub-subfamily. Monomer. Zn(2+) is required as a cofactor. In terms of processing, highly glycosylated. In terms of tissue distribution, expressed by the venom gland.

The protein resides in the secreted. Its activity is regulated as follows. Inhibited by EDTA and o-phenanthroline. Not inhibited by PMSF, benzamidine, irreversible serine-proteinase inhibitors and cysteine proteinase inhibitor E-64. In terms of biological role, potent activator of prothrombin (F2). Does not elicit any hemorrhagic response. Barely inhibits collagen-induced platelet aggregation. Binds neither collagen, nor the jararhagin monoclonal antibody MAJar3. Hydrolyzes the Aalpha-chain of fibrin and fibrinogen, without affecting the Bbeta- and gamma-chains. Is capable of triggering endothelial pro-inflammatory and procoagulant cell responses, but fails to trigger apoptosis. Induces von Willebrand factor release, and the expression of both ICAM1 and E-selectin (SELE) (without increase in VCAM1) in endothelial cells (HUVEC). Is also able to up-regulate the synthesis of the coagulation factor TF (F3). Enhances nitric oxide (NO) generation, prostacyclin production and interleukin-8 release. This is Zinc metalloproteinase-disintegrin-like berythractivase from Bothrops erythromelas (Caatinga lance head).